The primary structure comprises 211 residues: Thiamine-phosphate synthase (211 aa).

4-amino-2-methyl-5-(diphosphooxymethyl)pyrimidine contacts are provided by residues 39 to 43 (QLREK) and Asn71. The Mg(2+) site is built by Asp72 and Asp91. 4-amino-2-methyl-5-(diphosphooxymethyl)pyrimidine is bound at residue Ser110. A 2-[(2R,5Z)-2-carboxy-4-methylthiazol-5(2H)-ylidene]ethyl phosphate-binding site is contributed by 136-138 (TAT). Residue Lys139 coordinates 4-amino-2-methyl-5-(diphosphooxymethyl)pyrimidine. Residues Ala167 and 187-188 (VS) contribute to the 2-[(2R,5Z)-2-carboxy-4-methylthiazol-5(2H)-ylidene]ethyl phosphate site.

This sequence belongs to the thiamine-phosphate synthase family. Requires Mg(2+) as cofactor.

The enzyme catalyses 2-[(2R,5Z)-2-carboxy-4-methylthiazol-5(2H)-ylidene]ethyl phosphate + 4-amino-2-methyl-5-(diphosphooxymethyl)pyrimidine + 2 H(+) = thiamine phosphate + CO2 + diphosphate. The catalysed reaction is 2-(2-carboxy-4-methylthiazol-5-yl)ethyl phosphate + 4-amino-2-methyl-5-(diphosphooxymethyl)pyrimidine + 2 H(+) = thiamine phosphate + CO2 + diphosphate. It catalyses the reaction 4-methyl-5-(2-phosphooxyethyl)-thiazole + 4-amino-2-methyl-5-(diphosphooxymethyl)pyrimidine + H(+) = thiamine phosphate + diphosphate. It participates in cofactor biosynthesis; thiamine diphosphate biosynthesis; thiamine phosphate from 4-amino-2-methyl-5-diphosphomethylpyrimidine and 4-methyl-5-(2-phosphoethyl)-thiazole: step 1/1. Its function is as follows. Condenses 4-methyl-5-(beta-hydroxyethyl)thiazole monophosphate (THZ-P) and 2-methyl-4-amino-5-hydroxymethyl pyrimidine pyrophosphate (HMP-PP) to form thiamine monophosphate (TMP). In Solidesulfovibrio magneticus (strain ATCC 700980 / DSM 13731 / RS-1) (Desulfovibrio magneticus), this protein is Thiamine-phosphate synthase.